We begin with the raw amino-acid sequence, 466 residues long: Asparagine--tRNA ligase (466 aa).

This sequence belongs to the class-II aminoacyl-tRNA synthetase family. In terms of assembly, homodimer.

It localises to the cytoplasm. It carries out the reaction tRNA(Asn) + L-asparagine + ATP = L-asparaginyl-tRNA(Asn) + AMP + diphosphate + H(+). This Photorhabdus laumondii subsp. laumondii (strain DSM 15139 / CIP 105565 / TT01) (Photorhabdus luminescens subsp. laumondii) protein is Asparagine--tRNA ligase.